The following is a 312-amino-acid chain: DNA-directed RNA polymerase subunit alpha (312 aa).

The interval 1–226 is alpha N-terminal domain (alpha-NTD); the sequence is MIEFEKPNIT…EHFKVFMSTD (226 aa). Residues 243-312 form an alpha C-terminal domain (alpha-CTD) region; sequence NEKKLEMTIE…DLGLSLRQDD (70 aa).

The protein belongs to the RNA polymerase alpha chain family. As to quaternary structure, homodimer. The RNAP catalytic core consists of 2 alpha, 1 beta, 1 beta' and 1 omega subunit. When a sigma factor is associated with the core the holoenzyme is formed, which can initiate transcription.

The catalysed reaction is RNA(n) + a ribonucleoside 5'-triphosphate = RNA(n+1) + diphosphate. Functionally, DNA-dependent RNA polymerase catalyzes the transcription of DNA into RNA using the four ribonucleoside triphosphates as substrates. The protein is DNA-directed RNA polymerase subunit alpha of Lactobacillus johnsonii (strain CNCM I-12250 / La1 / NCC 533).